The following is a 566-amino-acid chain: Proline--tRNA ligase (566 aa).

This sequence belongs to the class-II aminoacyl-tRNA synthetase family. ProS type 1 subfamily. As to quaternary structure, homodimer.

It localises to the cytoplasm. It carries out the reaction tRNA(Pro) + L-proline + ATP = L-prolyl-tRNA(Pro) + AMP + diphosphate. Catalyzes the attachment of proline to tRNA(Pro) in a two-step reaction: proline is first activated by ATP to form Pro-AMP and then transferred to the acceptor end of tRNA(Pro). As ProRS can inadvertently accommodate and process non-cognate amino acids such as alanine and cysteine, to avoid such errors it has two additional distinct editing activities against alanine. One activity is designated as 'pretransfer' editing and involves the tRNA(Pro)-independent hydrolysis of activated Ala-AMP. The other activity is designated 'posttransfer' editing and involves deacylation of mischarged Ala-tRNA(Pro). The misacylated Cys-tRNA(Pro) is not edited by ProRS. The chain is Proline--tRNA ligase from Exiguobacterium sibiricum (strain DSM 17290 / CCUG 55495 / CIP 109462 / JCM 13490 / 255-15).